A 352-amino-acid chain; its full sequence is Putative squamosa promoter-binding-like protein 19 (352 aa).

A disordered region spans residues Ala68–Gly88. Residues Gly78–Gly88 show a composition bias toward gly residues. The SBP-type zinc-finger motif lies at Ala90–Pro167. 8 residues coordinate Zn(2+): Cys93, Cys98, Cys115, His118, Cys134, Cys137, His141, and Cys153. A Bipartite nuclear localization signal motif is present at residues Lys150–Lys166. The segment at Ser152–Pro174 is disordered.

The protein localises to the nucleus. In terms of biological role, trans-acting factor that binds specifically to the consensus nucleotide sequence 5'-TNCGTACAA-3'. This Oryza sativa subsp. japonica (Rice) protein is Putative squamosa promoter-binding-like protein 19 (SPL19).